We begin with the raw amino-acid sequence, 875 residues long: Phosphoenolpyruvate carboxylase (875 aa).

Active-site residues include histidine 137 and lysine 542.

Belongs to the PEPCase type 1 family. Mg(2+) is required as a cofactor.

It catalyses the reaction oxaloacetate + phosphate = phosphoenolpyruvate + hydrogencarbonate. In terms of biological role, forms oxaloacetate, a four-carbon dicarboxylic acid source for the tricarboxylic acid cycle. The polypeptide is Phosphoenolpyruvate carboxylase (Pseudomonas putida (strain ATCC 47054 / DSM 6125 / CFBP 8728 / NCIMB 11950 / KT2440)).